The following is a 251-amino-acid chain: Protein FAM216A (251 aa).

Polar residues predominate over residues 1-16; the sequence is MPNQGPVSDWTECSSS. Residues 1 to 49 are disordered; it reads MPNQGPVSDWTECSSSAEPPAVARAEGGGGGSAGHSYYQNSKDRIKDGH.

It belongs to the FAM216 family.

This Bos taurus (Bovine) protein is Protein FAM216A (FAM216A).